A 316-amino-acid polypeptide reads, in one-letter code: MSVFTPLERSTLEAFLAPYDLGRLRDFRGIAEGSENSNFFVSLEHGEFVLTLVERGPVQDLPFFIELLDVLHEDGLPVPYALRTRDGEALRRLEGKPALLQPRLAGRHERQPNAHHCQEVGDLLGHLHAATRGRILERPSDRGLPWMLEQGANLAPRLPEQARALLAPALAEIAALDAERPALPRANLHADLFRDNVLFDGPHLAGLIDFYNACSGWMLYDLAITLNDWCSNTDGSLDPARARALLAAYANRRPFTALEAEHWPSMLRVACVRFWLSRLIAAEAFAGQDVLIHDPAEFEMRLAQRQNVEIHLPFAL.

The protein belongs to the pseudomonas-type ThrB family.

It carries out the reaction L-homoserine + ATP = O-phospho-L-homoserine + ADP + H(+). The protein operates within amino-acid biosynthesis; L-threonine biosynthesis; L-threonine from L-aspartate: step 4/5. In Pseudomonas aeruginosa (strain LESB58), this protein is Homoserine kinase.